The following is a 151-amino-acid chain: uncharacterized protein (151 aa).

The N-terminal stretch at 1 to 32 is a signal peptide; that stretch reads MEEAEKAKRRSIELLNETRNCAYSSFVALAEA. Residues 45 to 67 form a helical membrane-spanning segment; sequence AIGFAGGISGSGHICGALWGSIA.

The protein localises to the membrane. This is an uncharacterized protein from Archaeoglobus fulgidus (strain ATCC 49558 / DSM 4304 / JCM 9628 / NBRC 100126 / VC-16).